The primary structure comprises 206 residues: Uridine kinase (206 aa).

Residue 11–18 coordinates ATP; that stretch reads GGSASGKT.

The protein belongs to the uridine kinase family.

The protein resides in the cytoplasm. It carries out the reaction uridine + ATP = UMP + ADP + H(+). The catalysed reaction is cytidine + ATP = CMP + ADP + H(+). Its pathway is pyrimidine metabolism; CTP biosynthesis via salvage pathway; CTP from cytidine: step 1/3. It participates in pyrimidine metabolism; UMP biosynthesis via salvage pathway; UMP from uridine: step 1/1. In Lactococcus lactis subsp. lactis (strain IL1403) (Streptococcus lactis), this protein is Uridine kinase.